The chain runs to 412 residues: Probable serine/threonine-protein kinase PBL10 (412 aa).

G2 carries N-myristoyl glycine lipidation. Residue C4 is the site of S-palmitoyl cysteine attachment. The tract at residues 15–45 (GASPKYMSSEANDSLGSKSSSVSIRTNPRTE) is disordered. Residues 23 to 43 (SEANDSLGSKSSSVSIRTNPR) are compositionally biased toward polar residues. Phosphothreonine is present on T58. Residues 69-356 (FRPDSVLGEG…VVSHLEHIQT (288 aa)) form the Protein kinase domain. ATP is bound by residues 75 to 83 (LGEGGFGSV) and K107. The residue at position 152 (Y152) is a Phosphotyrosine. Catalysis depends on D204, which acts as the Proton acceptor. Residues S208 and S238 each carry the phosphoserine modification. T239 and T244 each carry phosphothreonine. Y252 bears the Phosphotyrosine mark.

The protein belongs to the protein kinase superfamily. Ser/Thr protein kinase family. As to quaternary structure, interacts with the Xanthomonas campestris effector XopAC/AvrAC. In terms of tissue distribution, expressed in stomatal guard cells of leaves.

It localises to the cell membrane. The enzyme catalyses L-seryl-[protein] + ATP = O-phospho-L-seryl-[protein] + ADP + H(+). The catalysed reaction is L-threonyl-[protein] + ATP = O-phospho-L-threonyl-[protein] + ADP + H(+). Possible bi-functional kinase. In vitro, it exhibits serine/threonine activity. In vivo, can phosphorylate tyrosine residues of limited substrates. May be involved in plant defense signaling. Required for full light-induced stomatal opening. The sequence is that of Probable serine/threonine-protein kinase PBL10 from Arabidopsis thaliana (Mouse-ear cress).